Consider the following 298-residue polypeptide: Syntaxin-125 (298 aa).

An N-acetylmethionine modification is found at Met-1. Topologically, residues Met-1 to Ala-274 are cytoplasmic. Positions Thr-25 to Arg-155 form a coiled coil. Residues Ile-198–Ala-260 form the t-SNARE coiled-coil homology domain. The helical; Anchor for type IV membrane protein transmembrane segment at Ile-275–Leu-295 threads the bilayer. The Vesicular segment spans residues Met-296–Lys-298.

This sequence belongs to the syntaxin family. Part of the t-SNARE complex.

It localises to the membrane. In terms of biological role, vesicle trafficking protein that functions in the secretory pathway. This chain is Syntaxin-125 (SYP125), found in Arabidopsis thaliana (Mouse-ear cress).